The sequence spans 1055 residues: Sodium/potassium exporting P-type ATPase 1 (1055 aa).

The Cytoplasmic segment spans residues 1–73 (MTPSIGYVDE…GADEKISISK (73 aa)). Residues 74 to 94 (ILAHQIFNAMVLVLIISLIIA) traverse the membrane as a helical segment. The Extracellular segment spans residues 95–99 (LAIKD). The chain crosses the membrane as a helical span at residues 100–120 (WISGGVIGFVVFINIFVGFIQ). Residues 121–298 (ELKAEKTMGS…TNVGTPLQRK (178 aa)) lie on the Cytoplasmic side of the membrane. Residues 299–319 (LSWLAILLFWVAVLFAIVVMA) form a helical membrane-spanning segment. Residues 320–328 (SQEMRVNRN) are Extracellular-facing. The helical transmembrane segment at 329–349 (VAIYAICVALSMIPSSLVVVL) threads the bilayer. The Cytoplasmic portion of the chain corresponds to 350–789 (TITMAIGAQV…RMSSNIQKFV (440 aa)). D385 acts as the 4-aspartylphosphate intermediate in catalysis. Residues D385 and T387 each contribute to the Mg(2+) site. T387, E491, K544, R586, T646, G647, D648, R705, and K711 together coordinate ATP. D730 serves as a coordination point for Mg(2+). An ATP-binding site is contributed by N733. A helical membrane pass occupies residues 790–810 (LQLLAENVAQALYLMIGLAFI). Residues 811 to 816 (DKSGYS) lie on the Extracellular side of the membrane. Residues 817–837 (VFPLSPVEVLWIIVVTSCFPA) form a helical membrane-spanning segment. The Cytoplasmic segment spans residues 838–866 (MGLGQEKASHDILEQPPNATIFTWEVIID). Residues 867–887 (MIAYGFWMAVCCLVCFVCIVY) form a helical membrane-spanning segment. Over 888 to 913 (GKGDGSLGENCNEGSDTGCNLVFRGR) the chain is Extracellular. Residues 914 to 934 (SGAFAAFTWCALLLAWECIHL) form a helical membrane-spanning segment. Residues 935–962 (RLSFFKMRPELENPWWKQLAIDLWDNQF) are Cytoplasmic-facing. The helical transmembrane segment at 963–983 (LFWSVMGAIVSVFPVVYIPVI) threads the bilayer. Residues 984-990 (NNKVFLH) are Extracellular-facing. Residues 991–1011 (APIGYEWGLAVAFTILFLIGA) traverse the membrane as a helical segment. At 1012-1055 (EGWKWFKRVYYRKSNANNPEYDLERNDPFKEYSSFSKSNTMEIV) the chain is on the cytoplasmic side.

This sequence belongs to the cation transport ATPase (P-type) (TC 3.A.3) family. Type IID subfamily. Mg(2+) serves as cofactor. The active site is phosphorylated in presence of sodium or potassium and in conditions of higher pH. Not phosphorylated in presence of calcium ions.

It localises to the cell membrane. It carries out the reaction Na(+)(in) + ATP + H2O = Na(+)(out) + ADP + phosphate + H(+). It catalyses the reaction K(+)(in) + ATP + H2O = K(+)(out) + ADP + phosphate + H(+). Its function is as follows. Catalyzes the hydrolysis of ATP coupled with the export of sodium and potassium from the cell. May be an inefficient potassium exporter. May transport other cations such as lithium. Sodium/potassium efflux ATPases are involved in salt tolerance and maintaining the membrane potential across the plasma membrane in high salinity (Na+) or alkaline (K+) environments. The sequence is that of Sodium/potassium exporting P-type ATPase 1 from Schwanniomyces occidentalis (Yeast).